A 214-amino-acid chain; its full sequence is Ubiquitin-conjugating enzyme E2 21 (214 aa).

Residues 21–168 (ARVTRKCKEV…AVYWTSYFAN (148 aa)) enclose the UBC core domain. The active-site Glycyl thioester intermediate is the Cys106. The 43-residue stretch at 172–214 (DVEPDFNRKVGRLIEMGIRETEAIVYLSCNNWKLEQALQFIFD) folds into the UBA domain.

This sequence belongs to the ubiquitin-conjugating enzyme family.

It catalyses the reaction S-ubiquitinyl-[E1 ubiquitin-activating enzyme]-L-cysteine + [E2 ubiquitin-conjugating enzyme]-L-cysteine = [E1 ubiquitin-activating enzyme]-L-cysteine + S-ubiquitinyl-[E2 ubiquitin-conjugating enzyme]-L-cysteine.. The protein operates within protein modification; protein ubiquitination. Acts with E3 ubiquitin-protein ligase trim-21 to catalyze the 'Lys-48'-linked polyubiquitination of ced-1, promoting its proteasomal degradation to maintain appropriate ced-1 levels for apoptotic cell clearance. The protein is Ubiquitin-conjugating enzyme E2 21 (ubc-21) of Caenorhabditis elegans.